We begin with the raw amino-acid sequence, 269 residues long: MPLGLKPTCSVCKTTSSSMWKKGAQGEILCHHCTGRGGAGSGGAGSGAAGGTGGSGGGGFGAATFASTSATPPQSNGGGGGKQSKQEIHRRSARLRNTKYKSAPAAEKKVSTKGKGRRHIFKLKNPIKAPESVSTIITAESIFYKGVYYQIGDVVSVIDEQDGKPYYAQIRGFIQDQYCEKSAALTWLIPTLSSPRDQFDPASYIIGPEEDLPRKMEYLEFVCHAPSEYFKSRSSPFPTVPTRPEKGYIWTHVGPTPAITIKESVANHL.

Residues C9 to C33 form a GATA-type zinc finger. Positions A63–K115 are disordered. K262 participates in a covalent cross-link: Glycyl lysine isopeptide (Lys-Gly) (interchain with G-Cter in SUMO2).

As to quaternary structure, component of a chromatin complex, at least composed of KDM5A, GATAD1 and EMSY. As to expression, ubiquitously expressed among various tissue types. Expressed in left ventricular myocytes.

The protein localises to the nucleus. Component of some chromatin complex recruited to chromatin sites methylated 'Lys-4' of histone H3 (H3K4me), with a preference for trimethylated form (H3K4me3). This Homo sapiens (Human) protein is GATA zinc finger domain-containing protein 1 (GATAD1).